A 161-amino-acid chain; its full sequence is Allophycocyanin subunit alpha-B (161 aa).

Asparagine 71 is modified (N4-methylasparagine). Residue cysteine 81 participates in (2R,3E)-phycocyanobilin binding.

This sequence belongs to the phycobiliprotein family. As to quaternary structure, heterohexamer of two alpha chains, one alpha-B chain and three beta chains. In terms of processing, contains one covalently linked bilin chromophore.

The protein localises to the cellular thylakoid membrane. Light-harvesting photosynthetic bile pigment-protein from the phycobiliprotein complex. Allophycocyanin has a maximum absorption at approximately 654 nanometers. The protein is Allophycocyanin subunit alpha-B (apcD) of Synechocystis sp. (strain ATCC 27184 / PCC 6803 / Kazusa).